The following is a 244-amino-acid chain: HTH-type transcriptional regulator Cmr (244 aa).

41-160 (GSAPLHRDDV…RRWLSSVAQR (120 aa)) is an a nucleoside 3',5'-cyclic phosphate binding site. The HTH crp-type domain occupies 174-237 (RPLPAQVAQL…YAVIEITDQH (64 aa)). The segment at residues 197–216 (QRTLAAMLGAQRPSINKILK) is a DNA-binding region (H-T-H motif).

In terms of biological role, positively regulates the expression of at least groEL2. The sequence is that of HTH-type transcriptional regulator Cmr (cmr) from Mycobacterium tuberculosis (strain CDC 1551 / Oshkosh).